The sequence spans 420 residues: UDP-glucuronic acid decarboxylase 1 (420 aa).

Methionine 1 carries the post-translational modification N-acetylmethionine. Residues 1-19 (MVSKALLRLVSAVNRRRMK) lie on the Cytoplasmic side of the membrane. Residues 20–40 (LLLGIALLAYVASVWGNFVNM) form a helical; Signal-anchor for type II membrane protein membrane-spanning segment. Topologically, residues 41–420 (RSIQENGELK…RIKKGRTRHN (380 aa)) are lumenal. Threonine 94 is subject to Phosphothreonine. Glycine 98, phenylalanine 99, valine 100, aspartate 119, asparagine 120, phenylalanine 122, threonine 123, glycine 124, aspartate 144, and valine 145 together coordinate NAD(+). UDP-alpha-D-glucuronate contacts are provided by leucine 149 and tyrosine 150. NAD(+)-binding residues include leucine 159 and serine 161. Lysine 177 is a UDP-alpha-D-glucuronate binding site. Threonine 178 is an NAD(+) binding site. UDP-alpha-D-glucuronate-binding residues include asparagine 185, glycine 188, lysine 191, and arginine 192. Alanine 200, tyrosine 231, and lysine 235 together coordinate NAD(+). The Proton acceptor role is filled by tyrosine 231. The UDP-alpha-D-glucuronate site is built by tyrosine 245, glutamine 248, and glutamate 249. NAD(+)-binding residues include threonine 261, histidine 267, and arginine 272. Residue asparagine 316 is glycosylated (N-linked (GlcNAc...) asparagine).

The protein belongs to the NAD(P)-dependent epimerase/dehydratase family. UDP-glucuronic acid decarboxylase subfamily. Homodimer and homotetramer. Interacts with AKT1. It depends on NAD(+) as a cofactor.

The protein localises to the golgi apparatus. The protein resides in the golgi stack membrane. The catalysed reaction is UDP-alpha-D-glucuronate + H(+) = UDP-alpha-D-xylose + CO2. It functions in the pathway nucleotide-sugar biosynthesis; UDP-alpha-D-xylose biosynthesis; UDP-alpha-D-xylose from UDP-alpha-D-glucuronate: step 1/1. In terms of biological role, catalyzes the NAD-dependent decarboxylation of UDP-glucuronic acid to UDP-xylose. Necessary for the biosynthesis of the core tetrasaccharide in glycosaminoglycan biosynthesis. The polypeptide is UDP-glucuronic acid decarboxylase 1 (UXS1) (Pongo abelii (Sumatran orangutan)).